A 346-amino-acid chain; its full sequence is Methionine import ATP-binding protein MetN 1 (346 aa).

An ABC transporter domain is found at 2-241 (IEFKQVTKTF…PQHPTTEKFV (240 aa)). 38-45 (GFSGAGKS) serves as a coordination point for ATP.

It belongs to the ABC transporter superfamily. Methionine importer (TC 3.A.1.24) family. As to quaternary structure, the complex is composed of two ATP-binding proteins (MetN), two transmembrane proteins (MetI) and a solute-binding protein (MetQ).

It localises to the cell membrane. It carries out the reaction L-methionine(out) + ATP + H2O = L-methionine(in) + ADP + phosphate + H(+). The enzyme catalyses D-methionine(out) + ATP + H2O = D-methionine(in) + ADP + phosphate + H(+). In terms of biological role, part of the ABC transporter complex MetNIQ involved in methionine import. Responsible for energy coupling to the transport system. This is Methionine import ATP-binding protein MetN 1 from Shouchella clausii (strain KSM-K16) (Alkalihalobacillus clausii).